Consider the following 1615-residue polypeptide: Regulating synaptic membrane exocytosis protein 1 (1615 aa).

The segment at 1-26 (MSSAVGPRGPRPPTVPPPMQELPDLS) is disordered. The span at 9-20 (GPRPPTVPPPMQ) shows a compositional bias: pro residues. Positions 22-205 (LPDLSHLTEE…TKSGAWFFGS (184 aa)) constitute a RabBD domain. Residues 133 to 193 (KDDAPTCGIC…VCNLCRKQQE (61 aa)) form an FYVE-type zinc finger. Positions 139, 142, 155, 158, 163, 166, 185, and 188 each coordinate Zn(2+). The segment at 205 to 569 (SGPQQPSQDG…CEDVELESES (365 aa)) is disordered. The segment covering 206 to 222 (GPQQPSQDGTLSDTATG) has biased composition (polar residues). Basic and acidic residues predominate over residues 227–240 (VPREKKARLQERSR). Positions 241–256 (SQTPLSTAAVSSQDTA) are enriched in polar residues. The segment covering 327 to 379 (ADERERKERRETRRLEKGRSQDYSDRPEKRDNGRVAEDQKQRKEEEYQTRYRS) has biased composition (basic and acidic residues). A compositionally biased stretch (basic residues) spans 399–410 (MHARVSRARHER). A compositionally biased stretch (low complexity) spans 421-459 (EAAAAAPAEATAGKRAPATARVSPPESPRARAAAAQPPT). Over residues 460-475 (EHGPPPPRPAPGPAEP) the composition is skewed to pro residues. The span at 476–489 (PEPRVPEPLRKQGR) shows a compositional bias: basic and acidic residues. Positions 511–523 (RNDSLSSDQSESV) are enriched in polar residues. Phosphoserine is present on Ser-514. Residues 529 to 541 (KPHRPKRGGKRRQ) show a composition bias toward basic residues. Residues 559-569 (SCEDVELESES) show a composition bias toward acidic residues. Phosphoserine is present on Ser-592. The PDZ domain maps to 619–705 (RTTMPKESGA…EPQVEIIVSR (87 aa)). The tract at residues 712–746 (RIPESSHPPLESSSSSFESQKMERPSISVISPTSP) is disordered. The span at 714–730 (PESSHPPLESSSSSFES) shows a compositional bias: low complexity. Phosphoserine is present on residues Ser-742 and Ser-745. One can recognise a C2 1 domain in the interval 756–879 (LPGQLSVKLW…ALLDDEPHWY (124 aa)). Residues 884–1201 (HDESSLPLPQ…RQLPQVPVRS (318 aa)) form a disordered region. Phosphoserine is present on Ser-895. The segment covering 949–958 (ATTLTVPEQQ) has biased composition (polar residues). Residue Ser-991 is modified to Phosphoserine. The span at 1006–1023 (RHHDASRSPADHRSRHVE) shows a compositional bias: basic and acidic residues. Ser-1045 bears the Phosphoserine mark. The span at 1078 to 1092 (SPERERHSRKSERCS) shows a compositional bias: basic and acidic residues. Polar residues predominate over residues 1173-1187 (QGSPTQSPPADTSFG). Ser-1175 carries the post-translational modification Phosphoserine. At Thr-1177 the chain carries Phosphothreonine. Phosphoserine occurs at positions 1179, 1231, 1233, 1234, 1262, 1263, and 1265. The segment at 1256 to 1313 (DNASAKSSDSDVSDVSAISRASSTSRLSSTSFMSEQSERPRGRISSFTPKMQGRRMGT) is disordered. A compositionally biased stretch (low complexity) spans 1268–1289 (SDVSAISRASSTSRLSSTSFMS). The residue at position 1339 (Ser-1339) is a Phosphoserine. A disordered region spans residues 1368–1397 (RSRSTSQLSQTESGHKKLKSTIQRSTETGM). One can recognise a C2 2 domain in the interval 1461–1579 (AMGDIQIGME…DLSSMVIGWY (119 aa)). Phosphoserine is present on residues Ser-1600, Ser-1603, Ser-1606, and Ser-1615.

As to quaternary structure, interacts with RAB3C, RAB10, RAB26 and RAB37. Binds SNAP25, SYT1 and CACNA1B. Interaction with SYT1 is enhanced by calcium ions. Interaction with SNAP25 is weaker in the presence of calcium ions. Binds RAB3A, RAB3B and RAB3D that have been activated by GTP-binding. Binds UNC13A. Interacts with TSPOAP1 and RIMBP2. Interacts with PPFIA3 and PPFIA4. Interacts with ERC1. Post-translationally, phosphorylated by BRSK1. As to expression, highly expressed in hippocampus, brain cortex, cerebellum and olfactory bulb. Detected at lower levels in midbrain, hindbrain and spinal cord. Detected retina and in spinal cord motor neurons.

The protein resides in the cell membrane. The protein localises to the synapse. It is found in the presynaptic cell membrane. In terms of biological role, rab effector involved in exocytosis. May act as scaffold protein that regulates neurotransmitter release at the active zone. Essential for maintaining normal probability of neurotransmitter release and for regulating release during short-term synaptic plasticity. Plays a role in dendrite formation by melanocytes. This chain is Regulating synaptic membrane exocytosis protein 1 (Rims1), found in Rattus norvegicus (Rat).